The following is a 511-amino-acid chain: Activin receptor type-2B (511 aa).

An N-terminal signal peptide occupies residues 1–20 (MGASVALTFLLLLATFRAGS). The Extracellular portion of the chain corresponds to 21 to 136 (GHDEVETREC…KPQPSASVLN (116 aa)). A disulfide bond links cysteine 30 and cysteine 61. Residues asparagine 43 and asparagine 67 are each glycosylated (N-linked (GlcNAc...) asparagine). 3 disulfide bridges follow: cysteine 86-cysteine 105, cysteine 92-cysteine 104, and cysteine 106-cysteine 111. A helical transmembrane segment spans residues 137–157 (ILIYSLLPIVGLSMAILLAFW). At 158–511 (MYRHRKPSYG…VDLPPKESSI (354 aa)) the chain is on the cytoplasmic side. The 289-residue stretch at 189–477 (LQLLDIKARG…LSAGCVEERI (289 aa)) folds into the Protein kinase domain. Residues 195–203 (KARGRFGCV) and lysine 216 contribute to the ATP site. Aspartate 320 serves as the catalytic Proton acceptor.

Belongs to the protein kinase superfamily. TKL Ser/Thr protein kinase family. TGFB receptor subfamily.

The protein resides in the membrane. It catalyses the reaction L-threonyl-[receptor-protein] + ATP = O-phospho-L-threonyl-[receptor-protein] + ADP + H(+). It carries out the reaction L-seryl-[receptor-protein] + ATP = O-phospho-L-seryl-[receptor-protein] + ADP + H(+). Functionally, receptor for activin A, activin B and inhibin A. Involved in transmembrane signaling. In Xenopus laevis (African clawed frog), this protein is Activin receptor type-2B (acvr2b).